We begin with the raw amino-acid sequence, 365 residues long: Coxsackievirus and adenovirus receptor homolog (365 aa).

A signal peptide spans 1 to 19 (MELLLRFLLLCGVADFTRG). Ig-like C2-type domains are found at residues 20–136 (LSIT…IQLT) and 141–228 (PSGI…LRLD). Topologically, residues 20 to 238 (LSITTPEQMI…VVPPSNRAGT (219 aa)) are extracellular. 3 disulfide bridges follow: Cys41-Cys120, Cys146-Cys223, and Cys162-Cys212. N-linked (GlcNAc...) asparagine glycosylation occurs at Asn106. The chain crosses the membrane as a helical span at residues 239 to 259 (IAGAVIGTLLALVLIALIVFC). 2 S-palmitoyl cysteine lipidation sites follow: Cys259 and Cys260. Residues 260–365 (CHKKRREEKY…PAQSKDGSIV (106 aa)) lie on the Cytoplasmic side of the membrane. Residues 269 to 282 (YEKEVHHDIREDVP) are compositionally biased toward basic and acidic residues. Residues 269-343 (YEKEVHHDIR…TLPPAKVAAP (75 aa)) form a disordered region. A compositionally biased stretch (polar residues) spans 286–322 (SRTSTARSYIGSNHSSLGSMSPSNMEGYSKTQYNQVP). Phosphoserine is present on residues Ser297, Ser304, Ser306, Ser323, Ser332, and Ser363. Positions 360 to 365 (KDGSIV) match the PDZ-binding motif.

In terms of assembly, monomer. May form homodimers. Interacts with LNX, MAGI1, DLG4, PRKCABP, TJP1 and CTNNB1. Interacts with MPDZ; recruits MPDZ to intercellular contact sites. Interacts with JAML (homodimeric form). N-glycosylated. Post-translationally, palmitoylated on Cys-259 and/or Cys-260; required for proper localization to the plasma membrane.

The protein localises to the cell membrane. It localises to the basolateral cell membrane. It is found in the cell junction. The protein resides in the tight junction. Its subcellular location is the adherens junction. Functionally, component of the epithelial apical junction complex that may function as a homophilic cell adhesion molecule and is essential for tight junction integrity. Also involved in transepithelial migration of leukocytes through adhesive interactions with JAML a transmembrane protein of the plasma membrane of leukocytes. The interaction between both receptors also mediates the activation of gamma-delta T-cells, a subpopulation of T-cells residing in epithelia and involved in tissue homeostasis and repair. Upon epithelial CXADR-binding, JAML induces downstream cell signaling events in gamma-delta T-cells through PI3-kinase and MAP kinases. It results in proliferation and production of cytokines and growth factors by T-cells that in turn stimulate epithelial tissues repair. This Bos taurus (Bovine) protein is Coxsackievirus and adenovirus receptor homolog (CXADR).